The sequence spans 176 residues: 3-hydroxydecanoyl-[acyl-carrier-protein] dehydratase (176 aa).

His-75 is a catalytic residue.

This sequence belongs to the thioester dehydratase family. FabA subfamily. In terms of assembly, homodimer.

Its subcellular location is the cytoplasm. It carries out the reaction a (3R)-hydroxyacyl-[ACP] = a (2E)-enoyl-[ACP] + H2O. The enzyme catalyses (3R)-hydroxydecanoyl-[ACP] = (2E)-decenoyl-[ACP] + H2O. The catalysed reaction is (2E)-decenoyl-[ACP] = (3Z)-decenoyl-[ACP]. It functions in the pathway lipid metabolism; fatty acid biosynthesis. Functionally, necessary for the introduction of cis unsaturation into fatty acids. Catalyzes the dehydration of (3R)-3-hydroxydecanoyl-ACP to E-(2)-decenoyl-ACP and then its isomerization to Z-(3)-decenoyl-ACP. Can catalyze the dehydratase reaction for beta-hydroxyacyl-ACPs with saturated chain lengths up to 16:0, being most active on intermediate chain length. The chain is 3-hydroxydecanoyl-[acyl-carrier-protein] dehydratase from Haemophilus ducreyi (strain 35000HP / ATCC 700724).